A 148-amino-acid chain; its full sequence is MFQGETAITVDDKGRMAVPTAYRDLVARASNNRLVLTYNPFEAGCLWLYAESEWERVRDDVMSKPNTQRVVRLLQQKLVGSAAHLELDGNGRISIPASHRGAVGIEKKAVLLGMGDKFELWSEQAHRALIQQTLSDEDLGDGLLDLKL.

2 SpoVT-AbrB domains span residues E5–E53 and A82–A125.

Belongs to the MraZ family. As to quaternary structure, forms oligomers.

It localises to the cytoplasm. The protein resides in the nucleoid. This is Transcriptional regulator MraZ from Stenotrophomonas maltophilia (strain R551-3).